The chain runs to 331 residues: tRNA-dihydrouridine(20/20a) synthase (331 aa).

FMN-binding positions include 18–20 and Gln70; that span reads PML. Cys100 (proton donor) is an active-site residue. FMN is bound by residues Lys139, His172, 212–214, and 234–235; these read NGG and GR.

The protein belongs to the Dus family. DusA subfamily. FMN serves as cofactor.

It catalyses the reaction 5,6-dihydrouridine(20) in tRNA + NADP(+) = uridine(20) in tRNA + NADPH + H(+). It carries out the reaction 5,6-dihydrouridine(20) in tRNA + NAD(+) = uridine(20) in tRNA + NADH + H(+). The enzyme catalyses 5,6-dihydrouridine(20a) in tRNA + NADP(+) = uridine(20a) in tRNA + NADPH + H(+). The catalysed reaction is 5,6-dihydrouridine(20a) in tRNA + NAD(+) = uridine(20a) in tRNA + NADH + H(+). Functionally, catalyzes the synthesis of 5,6-dihydrouridine (D), a modified base found in the D-loop of most tRNAs, via the reduction of the C5-C6 double bond in target uridines. Specifically modifies U20 and U20a in tRNAs. The sequence is that of tRNA-dihydrouridine(20/20a) synthase from Escherichia coli O6:H1 (strain CFT073 / ATCC 700928 / UPEC).